A 1462-amino-acid chain; its full sequence is DNA topoisomerase 2 (1462 aa).

ATP is bound by residues Asn79, Asn108, 136–138 (SSN), and 149–156 (GRNGYGAK). Residues 332–334 (NKK) are interaction with DNA. 365–367 (QTK) provides a ligand contact to ATP. In terms of domain architecture, Toprim spans 442-556 (CTLILTEGDS…SLLKVPSFLV (115 aa)). Mg(2+) contacts are provided by Glu448, Asp525, and Asp527. The Topo IIA-type catalytic domain occupies 671 to 1131 (KDFVNKELIL…PTTSLWLKDL (461 aa)). Tyr761 serves as the catalytic O-(5'-phospho-DNA)-tyrosine intermediate. Residues 947–956 (KLTSTISTSN) are interaction with DNA. Disordered stretches follow at residues 1040–1077 (PMPR…SVSV) and 1147–1462 (EDDR…EDDD). The span at 1056–1068 (NDDDSEEQEDAEP) shows a compositional bias: acidic residues. Residues 1167–1181 (PAKKPPQPRKNTKKA) are compositionally biased toward basic residues. Residues 1198 to 1207 (AVEAAKPAEV) show a composition bias toward low complexity. Polar residues predominate over residues 1240–1250 (IESSGEKSQAM). The span at 1260 to 1275 (AGKKQNNKRGGAKKKS) shows a compositional bias: basic residues. Over residues 1282-1300 (SDSDNEVNDVDDDDDDFEE) the composition is skewed to acidic residues. Composition is skewed to low complexity over residues 1314 to 1334 (KPAA…APAA) and 1419 to 1430 (APQPARARPQRA). Over residues 1442 to 1462 (SESEEDSDEDAELSDFEEDDD) the composition is skewed to acidic residues.

Belongs to the type II topoisomerase family. In terms of assembly, homodimer. Mg(2+) serves as cofactor. The cofactor is Mn(2+). Ca(2+) is required as a cofactor. Abundant in proliferative tissues.

The enzyme catalyses ATP-dependent breakage, passage and rejoining of double-stranded DNA.. Control of topological states of DNA by transient breakage and subsequent rejoining of DNA strands. Topoisomerase II makes double-strand breaks. In Pisum sativum (Garden pea), this protein is DNA topoisomerase 2 (TOP2).